The sequence spans 168 residues: G/U mismatch-specific DNA glycosylase (168 aa).

It belongs to the uracil-DNA glycosylase (UDG) superfamily. TDG/mug family. As to quaternary structure, binds DNA as a monomer.

The protein resides in the cytoplasm. It carries out the reaction Specifically hydrolyzes mismatched double-stranded DNA and polynucleotides, releasing free uracil.. In terms of biological role, excises ethenocytosine and uracil, which can arise by alkylation or deamination of cytosine, respectively, from the corresponding mispairs with guanine in ds-DNA. It is capable of hydrolyzing the carbon-nitrogen bond between the sugar-phosphate backbone of the DNA and the mispaired base. The complementary strand guanine functions in substrate recognition. Required for DNA damage lesion repair in stationary-phase cells. The sequence is that of G/U mismatch-specific DNA glycosylase from Klebsiella pneumoniae (strain 342).